We begin with the raw amino-acid sequence, 384 residues long: MKAIVIGAGIGGLSAAVALKQSGIDCDVYEAVKEIKPVGAAISVWPNGVKCMAHLGMGDIMETFGGPLRRMAYRDFRSGENMTQFSLAPLIERTGSRPCPVSRAELQREMLDYWGRDSVQFGKRVTRCEEDADGVTVWFTDGSSASGDLLIAADGSHSALRPWVLGFTPQRRYAGYVNWNGLVEIDEALAPGDQWTTFVGEGKRVSLMPVSAGRFYFFFDVPLPAGLAEDRDTLRADLSRYFAGWAPPVQKLIAALDPQTTNRIEIHDIEPFSRLVRGRVALLGDAGHSTTPDIGQGGCAAMEDAVVLGAVFRQTRDIAAALCEYEAQRCDRVRDLVLKARKRCDITHGKDMQLTEAWYQELREETGERIINGMCDTILSGPLG.

Residues glycine 11, 30–31 (EA), serine 43, and valine 125 contribute to the FAD site. Substrate-binding positions include asparagine 178, arginine 204, and 216–218 (YFF). FAD is bound by residues aspartate 285 and 295-299 (GQGGC).

It belongs to the FAD-dependent urate hydroxylase family. The cofactor is FAD.

It catalyses the reaction urate + NADH + O2 + H(+) = 5-hydroxyisourate + NAD(+) + H2O. Its pathway is purine metabolism; urate degradation. Catalyzes the hydroxylation of uric acid to 5-hydroxyisourate. The protein is FAD-dependent urate hydroxylase (hpxO) of Klebsiella pneumoniae.